Consider the following 672-residue polypeptide: NADPH-Fe(3+) oxidoreductase subunit beta (672 aa).

The [4Fe-4S] cluster site is built by Cys-203, Cys-207, Cys-211, and Cys-215. 254-283 (KKVAIVGAGPAGLACAYYLALEGYPCTIYE) lines the FAD pocket. 388 to 421 (GKKVVVVGGGNTAIDCVRVALREGAEESTLLYRR) serves as a coordination point for NADP(+). 552-562 (TDLEGVFAGGD) serves as a coordination point for FAD.

Heterotetramer with 2 alpha subunits. [4Fe-4S] cluster serves as cofactor. FAD is required as a cofactor.

It localises to the cell membrane. Probably involved in acetate metabolism and not in the reduction of Fe(3+) chelates. May serve as a major route for NADP regeneration. The chain is NADPH-Fe(3+) oxidoreductase subunit beta (sfrB) from Geobacter sulfurreducens (strain DL-1 / KN400).